A 440-amino-acid chain; its full sequence is tRNA-2-methylthio-N(6)-dimethylallyladenosine synthase (440 aa).

In terms of domain architecture, MTTase N-terminal spans lysine 5 to threonine 121. The [4Fe-4S] cluster site is built by cysteine 14, cysteine 50, cysteine 84, cysteine 159, cysteine 163, and cysteine 166. One can recognise a Radical SAM core domain in the interval alanine 145–aspartate 378. The TRAM domain occupies aspartate 378–aspartate 440.

It belongs to the methylthiotransferase family. MiaB subfamily. Monomer. It depends on [4Fe-4S] cluster as a cofactor.

Its subcellular location is the cytoplasm. The enzyme catalyses N(6)-dimethylallyladenosine(37) in tRNA + (sulfur carrier)-SH + AH2 + 2 S-adenosyl-L-methionine = 2-methylsulfanyl-N(6)-dimethylallyladenosine(37) in tRNA + (sulfur carrier)-H + 5'-deoxyadenosine + L-methionine + A + S-adenosyl-L-homocysteine + 2 H(+). Catalyzes the methylthiolation of N6-(dimethylallyl)adenosine (i(6)A), leading to the formation of 2-methylthio-N6-(dimethylallyl)adenosine (ms(2)i(6)A) at position 37 in tRNAs that read codons beginning with uridine. The polypeptide is tRNA-2-methylthio-N(6)-dimethylallyladenosine synthase (Ruegeria sp. (strain TM1040) (Silicibacter sp.)).